Reading from the N-terminus, the 643-residue chain is Threonine--tRNA ligase (643 aa).

Residues 1–61 enclose the TGS domain; the sequence is MIKVTLKDGS…KEDVSLSICT (61 aa). The interval 240 to 540 is catalytic; it reads DHNKLGRELK…LIEKYAGAFP (301 aa). Zn(2+) contacts are provided by cysteine 335, histidine 386, and histidine 517.

This sequence belongs to the class-II aminoacyl-tRNA synthetase family. As to quaternary structure, homodimer. Requires Zn(2+) as cofactor.

Its subcellular location is the cytoplasm. The catalysed reaction is tRNA(Thr) + L-threonine + ATP = L-threonyl-tRNA(Thr) + AMP + diphosphate + H(+). Its function is as follows. Catalyzes the attachment of threonine to tRNA(Thr) in a two-step reaction: L-threonine is first activated by ATP to form Thr-AMP and then transferred to the acceptor end of tRNA(Thr). Also edits incorrectly charged L-seryl-tRNA(Thr). This chain is Threonine--tRNA ligase, found in Clostridium botulinum (strain Eklund 17B / Type B).